The following is a 454-amino-acid chain: N-myc 2 proto-oncogene protein (454 aa).

3 disordered regions span residues 133 to 166 (EKMQ…HSGT), 231 to 270 (AAPP…EEEE), and 326 to 374 (SPYV…VRRR). Residues 256 to 270 (ALSDEVDEEEDEEEE) are compositionally biased toward acidic residues. A compositionally biased stretch (basic and acidic residues) spans 363–374 (RKSDSEDSVRRR). The region spanning 371–423 (VRRRNHNILERQRRNDLRSSFTTLRDHVPELVKNEKAAKVVILKKACEYVHYL) is the bHLH domain. Positions 423–444 (LQAKEHQLLMEKEKLQARQQQL) are leucine-zipper.

In terms of assembly, efficient DNA binding requires dimerization with another bHLH protein.

The protein resides in the nucleus. The polypeptide is N-myc 2 proto-oncogene protein (N-MYC2) (Otospermophilus beecheyi (California ground squirrel)).